A 494-amino-acid polypeptide reads, in one-letter code: Aspartyl/glutamyl-tRNA(Asn/Gln) amidotransferase subunit B (494 aa).

This sequence belongs to the GatB/GatE family. GatB subfamily. As to quaternary structure, heterotrimer of A, B and C subunits.

The catalysed reaction is L-glutamyl-tRNA(Gln) + L-glutamine + ATP + H2O = L-glutaminyl-tRNA(Gln) + L-glutamate + ADP + phosphate + H(+). It catalyses the reaction L-aspartyl-tRNA(Asn) + L-glutamine + ATP + H2O = L-asparaginyl-tRNA(Asn) + L-glutamate + ADP + phosphate + 2 H(+). In terms of biological role, allows the formation of correctly charged Asn-tRNA(Asn) or Gln-tRNA(Gln) through the transamidation of misacylated Asp-tRNA(Asn) or Glu-tRNA(Gln) in organisms which lack either or both of asparaginyl-tRNA or glutaminyl-tRNA synthetases. The reaction takes place in the presence of glutamine and ATP through an activated phospho-Asp-tRNA(Asn) or phospho-Glu-tRNA(Gln). The sequence is that of Aspartyl/glutamyl-tRNA(Asn/Gln) amidotransferase subunit B from Rhodopseudomonas palustris (strain BisA53).